A 237-amino-acid chain; its full sequence is Placenta-expressed transcript 1 protein (237 aa).

Positions 1 to 27 are cleaved as a signal peptide; that stretch reads MLSLRSLLPHLGLFLCLALHLSPSLSA. N-linked (GlcNAc...) asparagine glycosylation is found at Asn-30, Asn-67, Asn-103, and Asn-136. Residues 145–162 are compositionally biased toward polar residues; sequence KMEQVQPSASTPIPESSE. The segment at 145 to 170 is disordered; that stretch reads KMEQVQPSASTPIPESSETSQTINTT. Ser-218 carries the GPI-anchor amidated serine lipid modification. Residues 219-237 constitute a propeptide, removed in mature form; it reads PLAGALHILLVFLISKLLF.

N-glycosylated. In terms of processing, GPI-anchored. As to expression, present in hair follicle cells and sebaceous gland of skin, ciliated epithelial cells of trachea and bronchial tube, striated portion of submandibular gland, distal convoluted tubule cells of kidney, ciliated epithelial cells of oviduct, medulla of adrenal gland and anterior lobe of pituitary gland. Expressed in keratinocytes of the hair follicle at the trichilemmal zone corresponding to the terminally differentiated outermost suprabasal outer root sheath (ORS), including that of the sebaceous gland duct (SGD) and the directly adjacent upper distal end of the companion layer (CL). Expression is similar in all hair follicle growth stages. Also detected during both the early and late anagen phases above the bulge of stem cells. Expressed at the leading edge of the epidermal wound. Not expressed in the interfollicular epidermis (IFE), inner root sheath (IRS) and hair fiber. Highly expressed in placenta. Detected in mammary and prostate epithelia and in the pancreas (at protein level).

It is found in the apical cell membrane. Modulates leading keratinocyte migration and cellular adhesion to matrix proteins during a wound-healing response and promotes wound repair. May play a role during trichilemmal differentiation of the hair follicle. The sequence is that of Placenta-expressed transcript 1 protein (Plet1) from Mus musculus (Mouse).